Here is a 306-residue protein sequence, read N- to C-terminus: MPFLELTLPCTRATQPRFENALEDVGALAVTMLDAHAGTINERAILEPGVGEVRLWEETELTALFDGDSDPLMLLAALEAFDPSLDTRHATFRSVEDSAWERAWIDQFKPMRFGARTFIVPWNQDLPEEANTPDAAVVRLDPGLAFGSGTHQTTALCLRWLDALAGEGQLQGCSVLDFGCGSGILALAALKLGAANAVGVDYDPQALLATAENAERNAMEAQMQVYLPQDEPVQTYPVVLANILATALDALAETLAARVAPGGRIALSGIMQGQEQDLVQRYTPWFEHLHCEYDAEWVRIDGVRRH.

The S-adenosyl-L-methionine site is built by T154, G179, D201, and N242.

It belongs to the methyltransferase superfamily. PrmA family.

The protein resides in the cytoplasm. The enzyme catalyses L-lysyl-[protein] + 3 S-adenosyl-L-methionine = N(6),N(6),N(6)-trimethyl-L-lysyl-[protein] + 3 S-adenosyl-L-homocysteine + 3 H(+). In terms of biological role, methylates ribosomal protein L11. In Xanthomonas campestris pv. campestris (strain 8004), this protein is Ribosomal protein L11 methyltransferase.